We begin with the raw amino-acid sequence, 376 residues long: N-acetyldiaminopimelate deacetylase (376 aa).

Asp69 is an active-site residue. The Proton acceptor role is filled by Glu128.

This sequence belongs to the peptidase M20A family. N-acetyldiaminopimelate deacetylase subfamily.

It carries out the reaction N-acetyl-(2S,6S)-2,6-diaminopimelate + H2O = (2S,6S)-2,6-diaminopimelate + acetate. Its pathway is amino-acid biosynthesis; L-lysine biosynthesis via DAP pathway; LL-2,6-diaminopimelate from (S)-tetrahydrodipicolinate (acetylase route): step 3/3. In terms of biological role, catalyzes the conversion of N-acetyl-diaminopimelate to diaminopimelate and acetate. The protein is N-acetyldiaminopimelate deacetylase of Streptococcus pneumoniae (strain P1031).